The following is a 599-amino-acid chain: Elongation factor 4 (599 aa).

One can recognise a tr-type G domain in the interval 5–187; that stretch reads KNIRNFSIIA…QLVERIPAPE (183 aa). GTP-binding positions include 17–22 and 134–137; these read DHGKST and NKID.

The protein belongs to the TRAFAC class translation factor GTPase superfamily. Classic translation factor GTPase family. LepA subfamily.

The protein localises to the cell inner membrane. It catalyses the reaction GTP + H2O = GDP + phosphate + H(+). Functionally, required for accurate and efficient protein synthesis under certain stress conditions. May act as a fidelity factor of the translation reaction, by catalyzing a one-codon backward translocation of tRNAs on improperly translocated ribosomes. Back-translocation proceeds from a post-translocation (POST) complex to a pre-translocation (PRE) complex, thus giving elongation factor G a second chance to translocate the tRNAs correctly. Binds to ribosomes in a GTP-dependent manner. In Alcanivorax borkumensis (strain ATCC 700651 / DSM 11573 / NCIMB 13689 / SK2), this protein is Elongation factor 4.